Reading from the N-terminus, the 312-residue chain is Dihydroorotate dehydrogenase B (NAD(+)), catalytic subunit (312 aa).

FMN is bound by residues serine 23 and 47–48; that span reads KA. Substrate contacts are provided by residues lysine 47 and 71–75; that span reads NAIGL. FMN contacts are provided by asparagine 103 and asparagine 131. Asparagine 131 is a substrate binding site. Residue cysteine 134 is the Nucleophile of the active site. 2 residues coordinate FMN: lysine 171 and isoleucine 197. Residue 198 to 199 coordinates substrate; the sequence is NT. FMN contacts are provided by residues glycine 223, 249–250, and 271–272; these read GG and GT.

Belongs to the dihydroorotate dehydrogenase family. Type 1 subfamily. In terms of assembly, heterotetramer of 2 PyrK and 2 PyrD type B subunits. Requires FMN as cofactor.

It localises to the cytoplasm. It carries out the reaction (S)-dihydroorotate + NAD(+) = orotate + NADH + H(+). It functions in the pathway pyrimidine metabolism; UMP biosynthesis via de novo pathway; orotate from (S)-dihydroorotate (NAD(+) route): step 1/1. Its function is as follows. Catalyzes the conversion of dihydroorotate to orotate with NAD(+) as electron acceptor. This chain is Dihydroorotate dehydrogenase B (NAD(+)), catalytic subunit (pyrDB), found in Streptococcus pneumoniae serotype 4 (strain ATCC BAA-334 / TIGR4).